Consider the following 296-residue polypeptide: Galectin-3 (296 aa).

A compositionally biased stretch (polar residues) spans M1–L11. Residues M1–A150 form a disordered region. Position 2 is an N-acetylalanine (A2). Phosphoserine; by CK1 occurs at positions 6 and 12. Low complexity-rich tracts occupy residues S12–A31 and G38–G47. Tandem repeats lie at residues Y36–A44, Y45–G53, Y54–G62, Y63–G71, Y72–G80, Y81–G89, Y90–G98, and Y99–T107. Positions Y36–A143 are 12 X 9 AA tandem repeats of Y-P-G-X(3)-P-G-[GAT]. The segment covering Q48–T120 has biased composition (pro residues). Residues Y108–A115 form a 9; approximate repeat. The stretch at Y116–T124 is repeat 10. Low complexity predominate over residues A121–G133. An 11; approximate repeat occupies Q125–A134. One copy of the 12; approximate repeat lies at Y135 to A143. A Galectin domain is found at Y164 to A294. W227 to Q233 lines the a beta-D-galactoside pocket. The Nuclear export signal motif lies at K272 to D287.

Probably forms homo- or heterodimers. Interacts with DMBT1. Interacts with CD6 and ALCAM. Forms a complex with the ITGA3, ITGB1 and CSPG4. Interacts with LGALS3BP, LYPD3, ZFTRAF1 and UACA. Interacts with TRIM16; this interaction mediates autophagy of damage endomembranes. Interacts with cargo receptor TMED10; the interaction mediates the translocation from the cytoplasm into the ERGIC (endoplasmic reticulum-Golgi intermediate compartment) and thereby secretion. Interacts with and inhibits by binding NCR3/NKp30. The degree of phosphorylation is higher in the cytoplasmic form than in the nuclear form. In protein isolated from a canine kidney cell line, 90% of the phosphate was on Ser-6 and 10% was on Ser-12.

The protein localises to the cytoplasm. It is found in the nucleus. It localises to the secreted. Its function is as follows. Galactose-specific lectin which binds IgE. May mediate with the alpha-3, beta-1 integrin the stimulation by CSPG4 of endothelial cells migration. Together with DMBT1, required for terminal differentiation of columnar epithelial cells during early embryogenesis. In the nucleus: acts as a pre-mRNA splicing factor. Involved in acute inflammatory responses including neutrophil activation and adhesion, chemoattraction of monocytes macrophages, opsonization of apoptotic neutrophils, and activation of mast cells. Together with TRIM16, coordinates the recognition of membrane damage with mobilization of the core autophagy regulators ATG16L1 and BECN1 in response to damaged endomembranes. When secreted, interacts with NK cell-activating receptor NCR3/NKp30 acting as an inhibitory ligand which antagonizes NK cell attack. This is Galectin-3 (LGALS3) from Canis lupus familiaris (Dog).